The sequence spans 201 residues: Retinol-binding protein 4 (201 aa).

Residues 1–18 (MEWVWALVVLAALGSAGA) form the signal peptide. Intrachain disulfides connect cysteine 22-cysteine 178, cysteine 88-cysteine 192, and cysteine 138-cysteine 147. Residue glutamine 116 participates in substrate binding. Arginine 139 bears the Omega-N-methylarginine mark.

It belongs to the calycin superfamily. Lipocalin family. Interacts with TTR. Interaction with TTR prevents its loss by filtration through the kidney glomeruli. Interacts with STRA6.

It localises to the secreted. Its function is as follows. Retinol-binding protein that mediates retinol transport in blood plasma. Delivers retinol from the liver stores to the peripheral tissues. Transfers the bound all-trans retinol to STRA6, that then facilitates retinol transport across the cell membrane. This is Retinol-binding protein 4 (RBP4) from Equus caballus (Horse).